The chain runs to 214 residues: Metalloproteinase inhibitor 3 (214 aa).

A signal peptide spans Met1–Ala26. Position 27 (Cys27) interacts with Zn(2+). Involved in metalloproteinase-binding stretches follow at residues Cys27–Met30 and Glu91–Ser92. 6 cysteine pairs are disulfide-bonded: Cys27-Cys94, Cys29-Cys121, Cys39-Cys146, Cys148-Cys195, Cys153-Cys158, and Cys166-Cys187. The NTR domain occupies Cys27 to Cys146. The N-linked (GlcNAc...) asparagine glycan is linked to Asn210.

The protein belongs to the protease inhibitor I35 (TIMP) family. As to expression, expressed abundantly in brain and cartilage.

It localises to the secreted. The protein localises to the extracellular space. Its subcellular location is the extracellular matrix. Functionally, complexes with metalloproteinases (such as collagenases) and irreversibly inactivates them by binding to their catalytic zinc cofactor. May form part of a tissue-specific acute response to remodeling stimuli. The protein is Metalloproteinase inhibitor 3 (TIMP3) of Scyliorhinus torazame (Cloudy catshark).